Reading from the N-terminus, the 157-residue chain is Endoribonuclease YbeY (157 aa).

Positions 114, 118, and 124 each coordinate Zn(2+).

Belongs to the endoribonuclease YbeY family. It depends on Zn(2+) as a cofactor.

Its subcellular location is the cytoplasm. Its function is as follows. Single strand-specific metallo-endoribonuclease involved in late-stage 70S ribosome quality control and in maturation of the 3' terminus of the 16S rRNA. The protein is Endoribonuclease YbeY of Klebsiella pneumoniae (strain 342).